We begin with the raw amino-acid sequence, 92 residues long: Protein S100-A6 (92 aa).

EF-hand domains are found at residues 12 to 47 (LVAI…IGAE) and 48 to 83 (LEDS…LAMI). Residues T28 and E33 each contribute to the Ca(2+) site. Position 40 is an N6-acetyllysine (K40). Residues D61, N63, D65, and E72 each contribute to the Ca(2+) site.

This sequence belongs to the S-100 family. In terms of assembly, homodimer; head to tail assembly of 2 subunits. Interacts with CACYBP in a calcium-dependent manner. Interacts with ANXA2 and ANXA11 (via N-terminus). Interacts with SUGT1. Interacts with TP53; has higher affinity for TP53 that is phosphorylated on its N-terminal domain, and lower affinity for TP53 that is phosphorylated on its C-terminal domain. Interacts with tropomyosin. Interacts with FKBP4. Interacts with PPP5C (via TPR repeats); the interaction is calcium-dependent and modulates PPP5C activity. Interacts with TPPP; this interaction inhibits TPPP dimerization.

The protein resides in the nucleus envelope. The protein localises to the cytoplasm. It is found in the cell membrane. May function as calcium sensor and modulator, contributing to cellular calcium signaling. May function by interacting with other proteins, such as TPR-containing proteins, and indirectly play a role in many physiological processes such as the reorganization of the actin cytoskeleton and in cell motility. Binds 2 calcium ions. Calcium binding is cooperative. The chain is Protein S100-A6 (S100A6) from Equus caballus (Horse).